The sequence spans 87 residues: MSERNQRKVYVGRVVSDKMDKTITVLVETYKKHPLYGKRVKYSKKYKAHDEHNEAKVGDIVKIMETRPLSATKRFRLVEIVEKAVVL.

Belongs to the universal ribosomal protein uS17 family. Part of the 30S ribosomal subunit.

Functionally, one of the primary rRNA binding proteins, it binds specifically to the 5'-end of 16S ribosomal RNA. This is Small ribosomal subunit protein uS17 from Geobacillus stearothermophilus (Bacillus stearothermophilus).